We begin with the raw amino-acid sequence, 215 residues long: MEEGERWIVVPTWRVPGRMEKWHSLVKYLKHRTKDLEGVCYVPHHKVGWAWWTCSRVIFPLQGNSHLEIQAYWNLTPEKGWLSSYAVRITWYTERFWTDVTPDCADSLIHSTYFSCFTAGEVRRAIRGEKLLSCCNYPQAHRSKVPLLQFLALVVVQQNGRPQKNSTTRKRWRSNYWRGFRLARKDGRGHKQRGSEPPASGAYFPGVAKVLEILA.

Phosphothreonine; by host MAP4K1 is present on Thr-98. Residues 110-141 (HSTYFSCFTAGEVRRAIRGEKLLSCCNYPQAH) carry the HCCH motif motif. The short motif at 147–156 (LLQFLALVVV) is the BC-box-like motif element. The multimerization stretch occupies residues 154–167 (VVVQQNGRPQKNST).

The protein belongs to the primate lentivirus group Vif protein family. Homomultimer; in vitro and presumably in vivo. Interacts with viral Pr55Gag precursor and human APOBEC3G. The interaction between Vif and APOBEC3G is species-specific, which may play a role in restricting the replication of HIV to humans. Forms an E3 ligase complex by interacting with human CUL5 and elongin BC complex (ELOB and ELOC). Post-translationally, processed in virion by the viral protease. In terms of processing, highly phosphorylated on serine and threonine residues. Polyubiquitinated and degraded by the proteasome in the presence of APOBEC3G.

Its subcellular location is the host cytoplasm. It localises to the host cell membrane. The protein resides in the virion. Functionally, counteracts the innate antiviral activity of APOBEC3G. Forms a complex with host APOBEC3G thus preventing the entry of this lethally hypermutating enzyme into progeny virions. Functions as an adapter molecule, recruiting APOBEC3G to the ubiquitin-proteasome machinery. Targets APOBEC3G for degradation through the assembly with elongin BC complex, CUL5 and RBX1. Binds viral RNA and affects the stability of viral nucleoprotein core. May play a role in viral morphology. The chain is Virion infectivity factor (vif) from Homo sapiens (Human).